Here is a 308-residue protein sequence, read N- to C-terminus: Aspartate carbamoyltransferase catalytic subunit (308 aa).

Carbamoyl phosphate is bound by residues R55 and T56. K83 contacts L-aspartate. Residues R105, H133, and Q136 each contribute to the carbamoyl phosphate site. Residues R166 and R220 each coordinate L-aspartate. Residues G261 and P262 each coordinate carbamoyl phosphate.

Belongs to the aspartate/ornithine carbamoyltransferase superfamily. ATCase family. As to quaternary structure, heterododecamer (2C3:3R2) of six catalytic PyrB chains organized as two trimers (C3), and six regulatory PyrI chains organized as three dimers (R2).

The catalysed reaction is carbamoyl phosphate + L-aspartate = N-carbamoyl-L-aspartate + phosphate + H(+). It functions in the pathway pyrimidine metabolism; UMP biosynthesis via de novo pathway; (S)-dihydroorotate from bicarbonate: step 2/3. Catalyzes the condensation of carbamoyl phosphate and aspartate to form carbamoyl aspartate and inorganic phosphate, the committed step in the de novo pyrimidine nucleotide biosynthesis pathway. The polypeptide is Aspartate carbamoyltransferase catalytic subunit (Chlorobaculum tepidum (strain ATCC 49652 / DSM 12025 / NBRC 103806 / TLS) (Chlorobium tepidum)).